The following is a 427-amino-acid chain: Ceramide Synthase FUM18 (427 aa).

The N-linked (GlcNAc...) asparagine glycan is linked to asparagine 20. 6 consecutive transmembrane segments (helical) span residues 38 to 58 (ILPL…IHIS), 131 to 151 (EQGW…LIWA), 173 to 193 (GLIK…VISV), 202 to 222 (YWLN…CYVY), 250 to 270 (YLGF…TWIV), and 335 to 355 (VSIL…FGFI). In terms of domain architecture, TLC spans 124-364 (RKVVRFSEQG…ICKVAIGVLD (241 aa)). A disordered region spans residues 373-406 (SDVESDEEDSEPVANGSGWQQSQLQPGRRVGSNG). Asparagine 387 is a glycosylation site (N-linked (GlcNAc...) asparagine).

Belongs to the sphingosine N-acyltransferase family.

The protein resides in the endoplasmic reticulum membrane. It functions in the pathway mycotoxin biosynthesis. Ceramide synthase; part of the gene cluster that mediates the biosynthesis of fumonisins B1 (FB1), B2 (FB2), B3 (FB3), and B4 (FB4), which are carcinogenic mycotoxins. Plays a role in self-protection from FB1 toxicity by contributing to ceramide synthesis. The biosynthesis starts with the FUM1-catalyzed carbon chain assembly from one molecule of acetyl-CoA, eight molecules of malonyl-CoA, and two molecules of methionine (in S-adenosyl form). The C18 polyketide chain is released from the enzyme by a nucleophilic attack of a carbanion, which is derived from R-carbon of alanine by decarboxylation, on the carbonyl carbon of polyketide acyl chain. This step is catalyzed by the pyridoxal 5'-phosphate-dependent aminoacyl transferase FUM8. The resultant 3-keto intermediate is then stereospecifically reduced to a 3-hydroxyl product by reductase FUM13. Subsequent oxidations at C-10 by the cytochrome P450 monooxygenase FUM2, C-14 and C-15 by FUM6, FUM12 or FUM15, tricarballylic esterification of the hydroxyl groups on C-14 and C-15 by acyltransferase FUM14, and C-5 hydroxylation by 2-keto-glutarate-dependent dioxygenase FUM3 furnish the biosynthesis of fumonisins. The tricarballylic moieties are most likely derived from the citric acid cycle, and their addition to the carbon backbone may involve FUM7, FUM10, FUM11 and FUM14. This chain is Ceramide Synthase FUM18, found in Gibberella moniliformis (strain M3125 / FGSC 7600) (Maize ear and stalk rot fungus).